Reading from the N-terminus, the 317-residue chain is Melanocyte-stimulating hormone receptor (317 aa).

The Extracellular portion of the chain corresponds to 1-37 (MPVQGSQRRLLGSLNSTPTATPRLGLAANQTGARCLE). N-linked (GlcNAc...) asparagine glycosylation occurs at N29. A helical membrane pass occupies residues 38–63 (VSIPDGLFLSLGLVSLVENVLVVVAI). Residues 64 to 72 (ARNRNLHSP) lie on the Cytoplasmic side of the membrane. The helical transmembrane segment at 73 to 93 (MYCFICCLALSDLLVSGSNML) threads the bilayer. The Extracellular portion of the chain corresponds to 94–118 (DTAVILLLEAGALAARAAVVQQLDN). The chain crosses the membrane as a helical span at residues 119–140 (VIDVITCSSMLSSLCFLGAIAV). Residues 141–163 (DRYISIFYALRYHSIVTLRRARR) lie on the Cytoplasmic side of the membrane. Residues 164 to 183 (VVAAIWVASILFSTLFIAYC) traverse the membrane as a helical segment. Residues 184–191 (DHAAVLLC) lie on the Extracellular side of the membrane. The helical transmembrane segment at 192–211 (LVVFFLAMLVLMAVLYVHML) threads the bilayer. At 212–240 (ARACQHAQGIAQLHKRQRPAHQGVGLKGA) the chain is on the cytoplasmic side. The chain crosses the membrane as a helical span at residues 241–266 (ATLTILLGIFFLCWGPFFLHLTLIVL). Residues 267 to 279 (CPQHPTCSCIFKN) lie on the Extracellular side of the membrane. The chain crosses the membrane as a helical span at residues 280–300 (FNLFLTLIICNAIIDPLIYAF). The Cytoplasmic segment spans residues 301-317 (RSQELRRTLKKVLLCSW). C315 is lipidated: S-palmitoyl cysteine.

This sequence belongs to the G-protein coupled receptor 1 family. In terms of assembly, interacts with MGRN1, but does not undergo MGRN1-mediated ubiquitination; this interaction competes with GNAS-binding and thus inhibits agonist-induced cAMP production. Interacts with OPN3; the interaction results in a decrease in MC1R-mediated cAMP signaling and ultimately a decrease in melanin production in melanocytes.

The protein localises to the cell membrane. Its function is as follows. Receptor for MSH (alpha, beta and gamma) and ACTH. The activity of this receptor is mediated by G proteins which activate adenylate cyclase. Mediates melanogenesis, the production of eumelanin (black/brown) and phaeomelanin (red/yellow), via regulation of cAMP signaling in melanocytes. In Trachypithecus francoisi (Francois' leaf monkey), this protein is Melanocyte-stimulating hormone receptor (MC1R).